The primary structure comprises 1906 residues: Serine protease/ABC transporter B family protein tagB (1906 aa).

A signal peptide spans 1 to 31 (MKFQFSSPSKIFLFSSVILILIFIGIKFELL). The segment at 96–134 (INNNNNNNNKLNNNNNNNNNNNNNNNNNNNNNNNNNNNN) is disordered. The Peptidase S8 domain occupies 356-763 (PTVIFGTKDK…ASSTNPSNAI (408 aa)). Catalysis depends on charge relay system residues Asp-387 and His-432. Asn-594, Asn-621, and Asn-672 each carry an N-linked (GlcNAc...) asparagine glycan. Ser-695 serves as the catalytic Charge relay system. Asn-747 and Asn-823 each carry an N-linked (GlcNAc...) asparagine glycan. A run of 3 helical transmembrane segments spans residues 1011-1031 (YIII…LMWI), 1076-1096 (FIIE…ASIL), and 1121-1141 (FIII…GSWI). One can recognise an ABC transmembrane type-1 domain in the interval 1080-1363 (LTIATACSLV…LFGVYVSYIQ (284 aa)). Residue Asn-1172 is glycosylated (N-linked (GlcNAc...) asparagine). Transmembrane regions (helical) follow at residues 1210-1230 (LVFI…AVPI), 1309-1329 (WLLI…LVIQ), and 1332-1352 (FTVG…DASS). Positions 1385-1455 (LEEEEADRLA…NNNNNIGNLD (71 aa)) are disordered. Over residues 1396–1405 (LSGGGGGGGD) the composition is skewed to gly residues. Positions 1407-1420 (GDDKKDKQNIENGK) are enriched in basic and acidic residues. In terms of domain architecture, ABC transporter spans 1518–1756 (IEFKNVSFRY…KGKYYRMFSE (239 aa)). Asn-1522 carries N-linked (GlcNAc...) asparagine glycosylation. 1553 to 1560 (GPSGSGKS) is an ATP binding site. The N-linked (GlcNAc...) asparagine glycan is linked to Asn-1658. The segment at 1757-1906 (DKDDTPLQNN…QMDEENDEER (150 aa)) is disordered. 2 stretches are compositionally biased toward low complexity: residues 1765-1779 (NNNN…NNNN) and 1814-1871 (EQQE…DYDQ). Over residues 1872–1886 (VPPPPPLPSESPSPP) the composition is skewed to pro residues.

In the C-terminal section; belongs to the ABC transporter superfamily. ABCB family. Multidrug resistance exporter (TC 3.A.1.201) subfamily. It in the N-terminal section; belongs to the peptidase S8 family.

Its subcellular location is the membrane. Functionally, intercellular communication via tagB may mediate integration of cellular differentiation with morphogenesis. This chain is Serine protease/ABC transporter B family protein tagB (tagB), found in Dictyostelium discoideum (Social amoeba).